Reading from the N-terminus, the 146-residue chain is uncharacterized protein (146 aa).

In terms of domain architecture, N-acetyltransferase spans 7-146 (LDINYKTDEL…DGHDVLVWTP (140 aa)).

This is an uncharacterized protein from Staphylococcus saprophyticus subsp. saprophyticus (strain ATCC 15305 / DSM 20229 / NCIMB 8711 / NCTC 7292 / S-41).